The chain runs to 297 residues: Protease HtpX homolog (297 aa).

Helical transmembrane passes span 14–34 (IFLI…AGYL) and 39–59 (YQFG…SMIF). Zn(2+) is bound at residue histidine 143. Glutamate 144 is an active-site residue. Histidine 147 lines the Zn(2+) pocket. The next 2 helical transmembrane spans lie at 153–173 (IRIS…ASMG) and 196–216 (IVFL…ASMV). Glutamate 225 is a binding site for Zn(2+).

Belongs to the peptidase M48B family. Requires Zn(2+) as cofactor.

Its subcellular location is the cell membrane. This chain is Protease HtpX homolog, found in Streptococcus uberis (strain ATCC BAA-854 / 0140J).